The chain runs to 652 residues: Acetyl-coenzyme A synthetase (652 aa).

Residues 191 to 194, T311, and N335 each bind CoA; that span reads RAGR. Residues 387-389, 411-416, D500, and R515 each bind ATP; these read GEP and DTWWQT. S523 contacts CoA. R526 contributes to the ATP binding site. Positions 537, 539, and 542 each coordinate Mg(2+). R584 is a CoA binding site. Position 609 is an N6-acetyllysine (K609).

It belongs to the ATP-dependent AMP-binding enzyme family. Requires Mg(2+) as cofactor. Post-translationally, acetylated. Deacetylation by the SIR2-homolog deacetylase activates the enzyme.

The catalysed reaction is acetate + ATP + CoA = acetyl-CoA + AMP + diphosphate. In terms of biological role, catalyzes the conversion of acetate into acetyl-CoA (AcCoA), an essential intermediate at the junction of anabolic and catabolic pathways. Acs undergoes a two-step reaction. In the first half reaction, Acs combines acetate with ATP to form acetyl-adenylate (AcAMP) intermediate. In the second half reaction, it can then transfer the acetyl group from AcAMP to the sulfhydryl group of CoA, forming the product AcCoA. Functionally, enables the cell to use acetate during aerobic growth to generate energy via the TCA cycle, and biosynthetic compounds via the glyoxylate shunt. Acetylates CheY, the response regulator involved in flagellar movement and chemotaxis. The chain is Acetyl-coenzyme A synthetase from Citrobacter koseri (strain ATCC BAA-895 / CDC 4225-83 / SGSC4696).